Reading from the N-terminus, the 1438-residue chain is DNA polymerase III PolC-type (1438 aa).

Residues 422–578 (YVVFDVETTG…YDTEATAYIF (157 aa)) form the Exonuclease domain.

It belongs to the DNA polymerase type-C family. PolC subfamily.

It is found in the cytoplasm. It catalyses the reaction DNA(n) + a 2'-deoxyribonucleoside 5'-triphosphate = DNA(n+1) + diphosphate. In terms of biological role, required for replicative DNA synthesis. This DNA polymerase also exhibits 3' to 5' exonuclease activity. In Staphylococcus epidermidis (strain ATCC 35984 / DSM 28319 / BCRC 17069 / CCUG 31568 / BM 3577 / RP62A), this protein is DNA polymerase III PolC-type.